Reading from the N-terminus, the 122-residue chain is Ribosome-binding factor A (122 aa).

This sequence belongs to the RbfA family. Monomer. Binds 30S ribosomal subunits, but not 50S ribosomal subunits or 70S ribosomes.

Its subcellular location is the cytoplasm. One of several proteins that assist in the late maturation steps of the functional core of the 30S ribosomal subunit. Associates with free 30S ribosomal subunits (but not with 30S subunits that are part of 70S ribosomes or polysomes). Required for efficient processing of 16S rRNA. May interact with the 5'-terminal helix region of 16S rRNA. The sequence is that of Ribosome-binding factor A from Syntrophomonas wolfei subsp. wolfei (strain DSM 2245B / Goettingen).